The chain runs to 280 residues: Acetyl-coenzyme A carboxylase carboxyl transferase subunit beta (280 aa).

The CoA carboxyltransferase N-terminal domain occupies 24-280 (AWIKCDKCKN…IYTLIRHTHG (257 aa)). Residues Cys-28, Cys-31, Cys-47, and Cys-50 each contribute to the Zn(2+) site. The C4-type zinc-finger motif lies at 28 to 50 (CDKCKNILYIEDLLKNLKICPHC).

Belongs to the AccD/PCCB family. Acetyl-CoA carboxylase is a heterohexamer composed of biotin carboxyl carrier protein (AccB), biotin carboxylase (AccC) and two subunits each of ACCase subunit alpha (AccA) and ACCase subunit beta (AccD). Requires Zn(2+) as cofactor.

It is found in the cytoplasm. It catalyses the reaction N(6)-carboxybiotinyl-L-lysyl-[protein] + acetyl-CoA = N(6)-biotinyl-L-lysyl-[protein] + malonyl-CoA. The protein operates within lipid metabolism; malonyl-CoA biosynthesis; malonyl-CoA from acetyl-CoA: step 1/1. Functionally, component of the acetyl coenzyme A carboxylase (ACC) complex. Biotin carboxylase (BC) catalyzes the carboxylation of biotin on its carrier protein (BCCP) and then the CO(2) group is transferred by the transcarboxylase to acetyl-CoA to form malonyl-CoA. The protein is Acetyl-coenzyme A carboxylase carboxyl transferase subunit beta of Sulfurihydrogenibium sp. (strain YO3AOP1).